The primary structure comprises 420 residues: Transcription factor TCP4 (420 aa).

The interval 1 to 27 (MSDDQFHHPPPPSSMRHRSTSDAADGG) is disordered. The 59-residue stretch at 45-103 (RKDRHSKVCTAKGPRDRRVRLSAHTAIQFYDVQDRLGFDRPSKAVDWLIKKAKTSIDEL) folds into the TCP domain. Disordered regions lie at residues 121-176 (NAKP…PSMD), 228-256 (LSLQSFPDGPPSLLHHQHHHHTSASASEP), 353-379 (HQSISTDDLNHHHHLPPPVHQSAIPGI), and 399-420 (QEEEQHDGLTHKPSSASSISRH). A compositionally biased stretch (polar residues) spans 410–420 (KPSSASSISRH).

Interacts with AHL27 and AHL29. Interacts with SPL. Interacts with JGB. Interacts with GI (via N-terminus). Expressed in cotyledons, particularly in the vascular region, in leaves, roots, buds, flowers and immature siliques.

The protein resides in the nucleus. In terms of biological role, transcription factor playing a pivotal role in the control of morphogenesis of shoot organs by negatively regulating the expression of boundary-specific genes such as CUC genes, probably through the induction of miRNA (e.g. miR164). Required during early steps of embryogenesis. Participates in ovule development. Activates LOX2 expression by binding to the 5'-GGACCA-3' motif found in its promoter. Activates YUC5 transcription by binding to the 5'-GTGGGCCA-3' motif found in its promoter. Through the activation of YUC5 transcription, integrates the auxin response to a brassinosteroid-dependent molecular circuit that promotes cell elongation in hypocotyls. Activates GIS transcription by binding to the 5'-TGGTCC-3' motif found in its promoter. Involved in the regulation of trichome branching through the activation of GIS transcription. Activates CO transcription by binding to the 5'-GGACCAC-3' motif found in its promoter. Involved in the regulation of photoperiodic flowering through the activation of CO transcription. Activates TCL1 and TCL2 transcription by binding to the 5'-TGGCCA-3' and 5'-GTGGACCA-3' motifS found in their respective promoters. Involved in the suppression of trichome initiaition through the activation of TCL1 and TCL2 transcription. Activates HAT2 transcription by binding to the 5'-TGGTCCAC-3' motif found in its promoter. Through the activation of HAT2 transcription, involved in the auxin-independent reprogramming of mitotic cells to exit division and acquire differentiation competence within the transition zone. The chain is Transcription factor TCP4 (TCP4) from Arabidopsis thaliana (Mouse-ear cress).